A 978-amino-acid chain; its full sequence is Transcription factor MYCGRDRAFT_87993 (978 aa).

2 consecutive C2H2-type zinc fingers follow at residues 2–24 (VFCT…ILTH) and 30–52 (FKCF…YTVH). A DNA-binding region (zn(2)-C6 fungal-type) is located at residues 79-105 (CSNCAKTKTKCDKKFPCSRCAGRNLRC). Disordered regions lie at residues 113-231 (ASKN…SPRF) and 426-445 (THRE…PSGA). Over residues 152-165 (SSSPSSQKSGTPIS) the composition is skewed to low complexity. Polar residues predominate over residues 432 to 445 (GTSNGSHSPNPSGA).

It is found in the nucleus. Functionally, transcription factor; part of the gene cluster 29 that mediates the biosynthesis of dihydroxynaphthalene (DHN)-melanin, a bluish-green pigment forming a dark layer in the conidial wall that protects the conidia from UV radiations. The sequence is that of Transcription factor MYCGRDRAFT_87993 from Zymoseptoria tritici (strain CBS 115943 / IPO323) (Speckled leaf blotch fungus).